Reading from the N-terminus, the 689-residue chain is Poly(A)-specific ribonuclease PARN (689 aa).

4 residues coordinate a divalent metal cation: aspartate 66, glutamate 68, aspartate 354, and aspartate 459.

It belongs to the CAF1 family. A divalent metal cation is required as a cofactor. In terms of tissue distribution, widely expressed. Expressed in roots, stems, leaves and flowers.

It localises to the nucleus. Its subcellular location is the cytoplasm. It carries out the reaction Exonucleolytic cleavage of poly(A) to 5'-AMP.. 3'-exoribonuclease that has a preference for poly(A) tails of mRNAs, thereby efficiently degrading poly(A) tails. Exonucleolytic degradation of the poly(A) tail is often the first step in the decay of eukaryotic mRNAs. Essential for early development, possibly by participating in silencing certain maternal mRNAs translationally. May have a pivotal role in stress response. This Arabidopsis thaliana (Mouse-ear cress) protein is Poly(A)-specific ribonuclease PARN (PARN).